The following is a 90-amino-acid chain: DNA/RNA-binding protein Alba (90 aa).

Lysine 8 bears the N6-acetyllysine mark.

It belongs to the histone-like Alba family. In terms of processing, acetylated. Acetylation at Lys-8 decreases DNA-binding affinity.

The protein localises to the cytoplasm. Its subcellular location is the chromosome. Binds double-stranded DNA tightly but without sequence specificity. Involved in DNA compaction. The protein is DNA/RNA-binding protein Alba of Nanoarchaeum equitans (strain Kin4-M).